The sequence spans 40 residues: Photosystem II reaction center protein J (40 aa).

Residues 8 to 28 form a helical membrane-spanning segment; the sequence is IPLWLVALVAGTGVLVVVGLF.

Belongs to the PsbJ family. PSII is composed of 1 copy each of membrane proteins PsbA, PsbB, PsbC, PsbD, PsbE, PsbF, PsbH, PsbI, PsbJ, PsbK, PsbL, PsbM, PsbT, PsbX, PsbY, PsbZ, Psb30/Ycf12, peripheral proteins PsbO, CyanoQ (PsbQ), PsbU, PsbV and a large number of cofactors. It forms dimeric complexes.

The protein resides in the cellular thylakoid membrane. Its function is as follows. One of the components of the core complex of photosystem II (PSII). PSII is a light-driven water:plastoquinone oxidoreductase that uses light energy to abstract electrons from H(2)O, generating O(2) and a proton gradient subsequently used for ATP formation. It consists of a core antenna complex that captures photons, and an electron transfer chain that converts photonic excitation into a charge separation. This is Photosystem II reaction center protein J from Trichodesmium erythraeum (strain IMS101).